Consider the following 148-residue polypeptide: Lysozyme C (148 aa).

Residues 1–18 (MKALIILGLVLLSVMVQA) form the signal peptide. In terms of domain architecture, C-type lysozyme spans 19–148 (KVFERCELAR…LRQYIQGCGV (130 aa)). Disulfide bonds link Cys-24-Cys-146, Cys-48-Cys-134, Cys-83-Cys-99, and Cys-95-Cys-113. Active-site residues include Glu-53 and Asp-71.

It belongs to the glycosyl hydrolase 22 family. Monomer.

The protein resides in the secreted. The catalysed reaction is Hydrolysis of (1-&gt;4)-beta-linkages between N-acetylmuramic acid and N-acetyl-D-glucosamine residues in a peptidoglycan and between N-acetyl-D-glucosamine residues in chitodextrins.. Functionally, lysozymes have primarily a bacteriolytic function; those in tissues and body fluids are associated with the monocyte-macrophage system and enhance the activity of immunoagents. In Hylobates lar (Lar gibbon), this protein is Lysozyme C (LYZ).